The following is a 259-amino-acid chain: Large ribosomal subunit protein eL8 (259 aa).

The tract at residues 1 to 24 is disordered; that stretch reads MAPKSKKVAPSPFAQPKAAKTTKN. Serine 11 and serine 33 each carry phosphoserine.

Belongs to the eukaryotic ribosomal protein eL8 family. As to quaternary structure, component of the large ribosomal subunit (LSU). Mature yeast ribosomes consist of a small (40S) and a large (60S) subunit. The 40S small subunit contains 1 molecule of ribosomal RNA (18S rRNA) and at least 33 different proteins. The large 60S subunit contains 3 rRNA molecules (25S, 5.8S and 5S rRNA) and at least 46 different proteins.

The protein localises to the cytoplasm. Functionally, component of the ribosome, a large ribonucleoprotein complex responsible for the synthesis of proteins in the cell. The small ribosomal subunit (SSU) binds messenger RNAs (mRNAs) and translates the encoded message by selecting cognate aminoacyl-transfer RNA (tRNA) molecules. The large subunit (LSU) contains the ribosomal catalytic site termed the peptidyl transferase center (PTC), which catalyzes the formation of peptide bonds, thereby polymerizing the amino acids delivered by tRNAs into a polypeptide chain. The nascent polypeptides leave the ribosome through a tunnel in the LSU and interact with protein factors that function in enzymatic processing, targeting, and the membrane insertion of nascent chains at the exit of the ribosomal tunnel. This chain is Large ribosomal subunit protein eL8 (rpl8), found in Schizosaccharomyces pombe (strain 972 / ATCC 24843) (Fission yeast).